The primary structure comprises 930 residues: Isoleucine--tRNA ligase (930 aa).

The 'HIGH' region signature appears at 57 to 67 (PYANGNIHVGH). Glutamate 554 is an L-isoleucyl-5'-AMP binding site. The 'KMSKS' region signature appears at 595–599 (KMSKS). Lysine 598 provides a ligand contact to ATP.

The protein belongs to the class-I aminoacyl-tRNA synthetase family. IleS type 1 subfamily. In terms of assembly, monomer.

It localises to the cytoplasm. It carries out the reaction tRNA(Ile) + L-isoleucine + ATP = L-isoleucyl-tRNA(Ile) + AMP + diphosphate. Its function is as follows. Catalyzes the attachment of isoleucine to tRNA(Ile). As IleRS can inadvertently accommodate and process structurally similar amino acids such as valine, to avoid such errors it has two additional distinct tRNA(Ile)-dependent editing activities. One activity is designated as 'pretransfer' editing and involves the hydrolysis of activated Val-AMP. The other activity is designated 'posttransfer' editing and involves deacylation of mischarged Val-tRNA(Ile). This chain is Isoleucine--tRNA ligase, found in Streptococcus agalactiae serotype Ia (strain ATCC 27591 / A909 / CDC SS700).